Reading from the N-terminus, the 320-residue chain is SUN domain-containing protein 3 (320 aa).

Residues 1-6 are Nuclear-facing; the sequence is MLTRSW. A helical membrane pass occupies residues 7–29; that stretch reads KIILSTVFISTFLLVGLLNHQWL. The Perinuclear space segment spans residues 30 to 320; that stretch reads KETEFPQKPR…RVHGIPSDYT (291 aa). A coiled-coil region spans residues 63–102; that stretch reads KEQQELLKKESQTLENNFREILFLIEQIDVLKALLKDMKD. One can recognise an SUN domain in the interval 156 to 317; it reads GASVIEAGTS…YRFRVHGIPS (162 aa).

Self-associates. Interacts with SYNE1 and SPAG4/SUN4. Proposed to form a spermatogenesis-specific LINC complex with SYNE1 during sperm head formation possibly implicating a SUN domain-based heterotrimer with SPAG4/SUN4 associating with SYNE1. Can interact with SYNE3; the interaction is questioned by missing colocalization in spermatids. As to expression, specifically expressed in testis (at protein level).

The protein localises to the membrane. It localises to the nucleus envelope. Its subcellular location is the nucleus inner membrane. As a probable component of the LINC (LInker of Nucleoskeleton and Cytoskeleton) complex, involved in the connection between the nuclear lamina and the cytoskeleton. The nucleocytoplasmic interactions established by the LINC complex play an important role in the transmission of mechanical forces across the nuclear envelope and in nuclear movement and positioning. May be involved in nuclear remodeling during sperm head formation in spermatogenesis. A probable SUN3:SYNE1 LINC complex may tether spermatid nuclei to posterior cytoskeletal structures such as the manchette. This chain is SUN domain-containing protein 3 (Sun3), found in Mus musculus (Mouse).